Reading from the N-terminus, the 115-residue chain is Peptidyl-tRNA hydrolase (115 aa).

Belongs to the PTH2 family.

Its subcellular location is the cytoplasm. It catalyses the reaction an N-acyl-L-alpha-aminoacyl-tRNA + H2O = an N-acyl-L-amino acid + a tRNA + H(+). In terms of biological role, the natural substrate for this enzyme may be peptidyl-tRNAs which drop off the ribosome during protein synthesis. The sequence is that of Peptidyl-tRNA hydrolase from Archaeoglobus fulgidus (strain ATCC 49558 / DSM 4304 / JCM 9628 / NBRC 100126 / VC-16).